Here is a 936-residue protein sequence, read N- to C-terminus: Isoleucine--tRNA ligase (936 aa).

The 'HIGH' region motif lies at 58-68; it reads PYANGNIHIGH. Residue Glu-560 coordinates L-isoleucyl-5'-AMP. The 'KMSKS' region motif lies at 601–605; sequence KMSKS. Lys-604 serves as a coordination point for ATP. The Zn(2+) site is built by Cys-899, Cys-902, Cys-919, and Cys-922.

The protein belongs to the class-I aminoacyl-tRNA synthetase family. IleS type 1 subfamily. In terms of assembly, monomer. Requires Zn(2+) as cofactor.

Its subcellular location is the cytoplasm. The catalysed reaction is tRNA(Ile) + L-isoleucine + ATP = L-isoleucyl-tRNA(Ile) + AMP + diphosphate. In terms of biological role, catalyzes the attachment of isoleucine to tRNA(Ile). As IleRS can inadvertently accommodate and process structurally similar amino acids such as valine, to avoid such errors it has two additional distinct tRNA(Ile)-dependent editing activities. One activity is designated as 'pretransfer' editing and involves the hydrolysis of activated Val-AMP. The other activity is designated 'posttransfer' editing and involves deacylation of mischarged Val-tRNA(Ile). In Proteus mirabilis (strain HI4320), this protein is Isoleucine--tRNA ligase.